The sequence spans 502 residues: Maturase K (502 aa).

Belongs to the intron maturase 2 family. MatK subfamily.

The protein resides in the plastid. It is found in the chloroplast. Usually encoded in the trnK tRNA gene intron. Probably assists in splicing its own and other chloroplast group II introns. This is Maturase K from Vaccinium vitis-idaea (Mountain cranberry).